The chain runs to 410 residues: Transcription factor rglT (410 aa).

The tract at residues 1-24 (MQFDSLPLPPSSSHDTTSVPPLKR) is disordered. Residues 28-55 (CDECRKRKLKCSGEATGCSRCLKQSLPC) constitute a DNA-binding region (zn(2)-C6 fungal-type). The segment at 353–372 (HRTRTVESPNEPGSCSPVSH) is disordered. Residues 358–369 (VESPNEPGSCSP) are compositionally biased toward polar residues.

The protein localises to the nucleus. In terms of biological role, transcription factor that is involved in protection against oxidative stress. Binds to promoter regions of the gliotoxin (GT) biosynthetic genes gliZ, gliF, gliT, gliM, gliA and gtmA. Two related but different DNA motifs (5'-TCGG-3' and 5'-CGGNCGG-3') are specifically enriched among rglT binding sites in GT-inducing conditions. Also indirectly regulates the expression of gliP, gliG, gliH and gliN. Plays a key role in resistance against exogenously-added GT and GT biosynthesis, mainly through the direct regulation of gliT. Furthermore, rglT is important for virulence in chemotherapeutic mice with invasive pulmonary aspergillosis (IPA). The chain is Transcription factor rglT from Aspergillus fumigatus (strain CBS 144.89 / FGSC A1163 / CEA10) (Neosartorya fumigata).